The sequence spans 1071 residues: SLIT-ROBO Rho GTPase-activating protein 2 (1071 aa).

The 304-residue stretch at 22 to 325 (KEIRAQLTEQ…AVENLDATSD (304 aa)) folds into the F-BAR domain. Residues 181 to 203 (LKEAEKQEEKQIGKSVKQEDRQT) show a composition bias toward basic and acidic residues. The disordered stretch occupies residues 181–211 (LKEAEKQEEKQIGKSVKQEDRQTPRSPDSTA). The residue at position 206 (serine 206) is a Phosphoserine. A coiled-coil region spans residues 363-401 (QSELVQRCQQLQSRLSTLKIENEEVKKTMEATLQTIQDI). Residues serine 427, serine 500, serine 691, and serine 695 each carry the phosphoserine modification. Residues 489 to 679 (ARRSSTVRKQ…TIIIQHENIF (191 aa)) form the Rho-GAP domain. The interval 700 to 726 (CDSTHGETTSAEDSTQDVTAEHHTSDD) is disordered. Residues 705-717 (GETTSAEDSTQDV) show a composition bias toward polar residues. Serine 724 bears the Phosphoserine mark. One can recognise an SH3 domain in the interval 728 to 787 (CEPIEAIAKFDYVGRTARELSFKKGASLLLYQRASDDWWEGRHNGIDGLIPHQYIVVQDT). Serine 795 carries the phosphoserine modification. Disordered stretches follow at residues 795-819 (SSPK…TGAS) and 838-918 (RKRP…DSPQ). Residues 855–868 (HGLGSSLTDSSSLG) show a composition bias toward low complexity. Polar residues-rich tracts occupy residues 874-885 (RPSSQPIMSQNL) and 897-907 (GHGSLNSISRH). Residue serine 916 is modified to Phosphoserine. Symmetric dimethylarginine; by PRMT5 is present on arginine 927. Serine 930 is modified (phosphoserine). Residues 940–968 (EVIAQDIEATMNSALNELQELERQSSAKH) adopt a coiled-coil conformation. Residues 984–1012 (PVVAPTSEPSSPLHTQLLKDPEPAFQRSA) are disordered. Serine 990, serine 994, serine 1013, and serine 1027 each carry phosphoserine. Positions 1029–1071 (KMAAPVKPPATRPKPTVFPKTNATSPGVNSSASPQATDKSCTV) are disordered. The span at 1047–1071 (PKTNATSPGVNSSASPQATDKSCTV) shows a compositional bias: polar residues.

As to quaternary structure, homodimer. Forms a heterooligomer with SRGAP1 and SRGAP3 through its F-BAR domain. Interacts (via SH3 domain) with GPHN. Interacts (via SH3 domain) with FMNL1 (activated by RAC1); regulates the actin filament severing activity of FMNL1 and actin dynamics. Interacts (via SH3 domain) with FMNL3. Interacts with RAC1; specifically stimulates RAC1 GTPase activity. Interacts (via F-BAR domain) with HOMER1. Interacts with ROBO1 and ROBO2. Interacts with FASLG. Interacts with PRMT5. In terms of processing, methylation at Arg-927 is required for the stimulation of cell migration, dimerization and localization at the plasma membrane protrusions.

Its subcellular location is the cell membrane. It localises to the cell projection. The protein localises to the dendritic spine. It is found in the postsynaptic density. The protein resides in the postsynaptic cell membrane. Its subcellular location is the lamellipodium. It localises to the cytoplasmic vesicle. The protein localises to the phagosome. It is found in the nucleus. The protein resides in the cytoplasm. Its subcellular location is the cytosol. Functionally, postsynaptic RAC1 GTPase activating protein (GAP) that plays a key role in neuronal morphogenesis and migration mainly during development of the cerebral cortex. Regulates excitatory and inhibitory synapse maturation and density in cortical pyramidal neurons. SRGAP2/SRGAP2A limits excitatory and inhibitory synapse density through its RAC1-specific GTPase activating activity, while it promotes maturation of both excitatory and inhibitory synapses through its ability to bind to the postsynaptic scaffolding protein HOMER1 at excitatory synapses, and the postsynaptic protein GPHN at inhibitory synapses. Mechanistically, acts by binding and deforming membranes, thereby regulating actin dynamics to regulate cell migration and differentiation. Promotes cell repulsion and contact inhibition of locomotion: localizes to protrusions with curved edges and controls the duration of RAC1 activity in contact protrusions. In non-neuronal cells, may also play a role in cell migration by regulating the formation of lamellipodia and filopodia. This Mus musculus (Mouse) protein is SLIT-ROBO Rho GTPase-activating protein 2.